Reading from the N-terminus, the 467-residue chain is Pup--protein ligase (467 aa).

Glutamate 12 serves as a coordination point for Mg(2+). An ATP-binding site is contributed by arginine 56. A Mg(2+)-binding site is contributed by tyrosine 58. Catalysis depends on aspartate 60, which acts as the Proton acceptor. A Mg(2+)-binding site is contributed by glutamate 66. Positions 69 and 431 each coordinate ATP.

It belongs to the Pup ligase/Pup deamidase family. Pup-conjugating enzyme subfamily.

It catalyses the reaction ATP + [prokaryotic ubiquitin-like protein]-L-glutamate + [protein]-L-lysine = ADP + phosphate + N(6)-([prokaryotic ubiquitin-like protein]-gamma-L-glutamyl)-[protein]-L-lysine.. Its pathway is protein degradation; proteasomal Pup-dependent pathway. It participates in protein modification; protein pupylation. Its function is as follows. Catalyzes the covalent attachment of the prokaryotic ubiquitin-like protein modifier Pup to the proteasomal substrate proteins, thereby targeting them for proteasomal degradation. This tagging system is termed pupylation. The ligation reaction involves the side-chain carboxylate of the C-terminal glutamate of Pup and the side-chain amino group of a substrate lysine. The chain is Pup--protein ligase from Corynebacterium jeikeium (strain K411).